The following is a 135-amino-acid chain: Small ribosomal subunit protein uS12 (135 aa).

At Asp89 the chain carries 3-methylthioaspartic acid. Residues 106–135 (GVANRRQSRSKYGAKRPKAGAAQATKGGKK) are disordered. A compositionally biased stretch (basic residues) spans 111-123 (RQSRSKYGAKRPK). Residues 124–135 (AGAAQATKGGKK) are compositionally biased toward low complexity.

It belongs to the universal ribosomal protein uS12 family. In terms of assembly, part of the 30S ribosomal subunit. Contacts proteins S8 and S17. May interact with IF1 in the 30S initiation complex.

With S4 and S5 plays an important role in translational accuracy. Functionally, interacts with and stabilizes bases of the 16S rRNA that are involved in tRNA selection in the A site and with the mRNA backbone. Located at the interface of the 30S and 50S subunits, it traverses the body of the 30S subunit contacting proteins on the other side and probably holding the rRNA structure together. The combined cluster of proteins S8, S12 and S17 appears to hold together the shoulder and platform of the 30S subunit. The chain is Small ribosomal subunit protein uS12 from Hydrogenobaculum sp. (strain Y04AAS1).